A 233-amino-acid chain; its full sequence is ATP-dependent Clp protease proteolytic subunit 1 (233 aa).

Ser116 functions as the Nucleophile in the catalytic mechanism. His141 is a catalytic residue.

Belongs to the peptidase S14 family. Fourteen ClpP subunits assemble into 2 heptameric rings which stack back to back to give a disk-like structure with a central cavity, resembling the structure of eukaryotic proteasomes.

Its subcellular location is the cytoplasm. The enzyme catalyses Hydrolysis of proteins to small peptides in the presence of ATP and magnesium. alpha-casein is the usual test substrate. In the absence of ATP, only oligopeptides shorter than five residues are hydrolyzed (such as succinyl-Leu-Tyr-|-NHMec, and Leu-Tyr-Leu-|-Tyr-Trp, in which cleavage of the -Tyr-|-Leu- and -Tyr-|-Trp bonds also occurs).. Functionally, cleaves peptides in various proteins in a process that requires ATP hydrolysis. Has a chymotrypsin-like activity. Plays a major role in the degradation of misfolded proteins. This Salinibacter ruber (strain DSM 13855 / M31) protein is ATP-dependent Clp protease proteolytic subunit 1.